Consider the following 231-residue polypeptide: Orotate phosphoribosyltransferase (231 aa).

5-phospho-alpha-D-ribose 1-diphosphate contacts are provided by residues lysine 27, tyrosine 79–lysine 80, arginine 106, lysine 107, lysine 110, histidine 112, and aspartate 133–alanine 141. Residues threonine 137 and arginine 166 each contribute to the orotate site.

This sequence belongs to the purine/pyrimidine phosphoribosyltransferase family. PyrE subfamily. As to quaternary structure, homodimer. Requires Mg(2+) as cofactor.

The catalysed reaction is orotidine 5'-phosphate + diphosphate = orotate + 5-phospho-alpha-D-ribose 1-diphosphate. It functions in the pathway pyrimidine metabolism; UMP biosynthesis via de novo pathway; UMP from orotate: step 1/2. Catalyzes the transfer of a ribosyl phosphate group from 5-phosphoribose 1-diphosphate to orotate, leading to the formation of orotidine monophosphate (OMP). The chain is Orotate phosphoribosyltransferase from Bifidobacterium longum (strain NCC 2705).